We begin with the raw amino-acid sequence, 73 residues long: Large ribosomal subunit protein bL31 (73 aa).

It belongs to the bacterial ribosomal protein bL31 family. Type A subfamily. As to quaternary structure, part of the 50S ribosomal subunit.

Binds the 23S rRNA. The chain is Large ribosomal subunit protein bL31 (rpmE) from Jannaschia sp. (strain CCS1).